Consider the following 397-residue polypeptide: Glia-derived nexin (397 aa).

The signal sequence occupies residues 1-19 (MNWHFPFFILTTVTLSSVY). The N-linked (GlcNAc...) asparagine glycan is linked to asparagine 159.

The protein belongs to the serpin family.

The protein localises to the secreted. It is found in the extracellular space. In terms of biological role, serine protease inhibitor with activity toward thrombin, trypsin, and urokinase. Promotes neurite extension by inhibiting thrombin. Binds heparin. The sequence is that of Glia-derived nexin (Serpine2) from Rattus norvegicus (Rat).